The primary structure comprises 479 residues: PRAME family member 18 (479 aa).

An LRR 1 repeat occupies Q15 to P38. The stretch at R97–C124 is one LRR 1; degenerate repeat. The stretch at H179–Y203 is one LRR 2; degenerate repeat. An LRR 3; degenerate repeat occupies P204–Q230. The stretch at M231–R265 is one LRR 4; degenerate repeat. LRR repeat units lie at residues L266–L291, R292–K323, Q324–A342, A348–R375, and C376–H400.

Belongs to the PRAME family.

The sequence is that of PRAME family member 18 from Homo sapiens (Human).